The primary structure comprises 341 residues: Anthranilate phosphoribosyltransferase (341 aa).

Residues G79, 82–83 (GD), T87, 89–92 (NIST), 107–115 (KHGNRAVSS), and S119 each bind 5-phospho-alpha-D-ribose 1-diphosphate. An anthranilate-binding site is contributed by G79. Mg(2+) is bound at residue S91. N110 provides a ligand contact to anthranilate. Position 165 (R165) interacts with anthranilate. Mg(2+) is bound by residues D224 and E225.

It belongs to the anthranilate phosphoribosyltransferase family. In terms of assembly, homodimer. Mg(2+) serves as cofactor.

The enzyme catalyses N-(5-phospho-beta-D-ribosyl)anthranilate + diphosphate = 5-phospho-alpha-D-ribose 1-diphosphate + anthranilate. Its pathway is amino-acid biosynthesis; L-tryptophan biosynthesis; L-tryptophan from chorismate: step 2/5. In terms of biological role, catalyzes the transfer of the phosphoribosyl group of 5-phosphorylribose-1-pyrophosphate (PRPP) to anthranilate to yield N-(5'-phosphoribosyl)-anthranilate (PRA). The polypeptide is Anthranilate phosphoribosyltransferase (Bacillus cereus (strain ZK / E33L)).